The following is a 395-amino-acid chain: Succinyl-diaminopimelate desuccinylase (395 aa).

His74 contributes to the Zn(2+) binding site. Asp76 is an active-site residue. Asp107 lines the Zn(2+) pocket. Glu141 acts as the Proton acceptor in catalysis. Residues Glu142, Glu170, and His368 each contribute to the Zn(2+) site.

Belongs to the peptidase M20A family. DapE subfamily. Homodimer. The cofactor is Zn(2+). Co(2+) is required as a cofactor.

The enzyme catalyses N-succinyl-(2S,6S)-2,6-diaminopimelate + H2O = (2S,6S)-2,6-diaminopimelate + succinate. The protein operates within amino-acid biosynthesis; L-lysine biosynthesis via DAP pathway; LL-2,6-diaminopimelate from (S)-tetrahydrodipicolinate (succinylase route): step 3/3. Catalyzes the hydrolysis of N-succinyl-L,L-diaminopimelic acid (SDAP), forming succinate and LL-2,6-diaminopimelate (DAP), an intermediate involved in the bacterial biosynthesis of lysine and meso-diaminopimelic acid, an essential component of bacterial cell walls. This chain is Succinyl-diaminopimelate desuccinylase, found in Brucella melitensis biotype 2 (strain ATCC 23457).